A 156-amino-acid polypeptide reads, in one-letter code: Small ribosomal subunit protein uS7 (156 aa).

Belongs to the universal ribosomal protein uS7 family. Part of the 30S ribosomal subunit. Contacts proteins S9 and S11.

In terms of biological role, one of the primary rRNA binding proteins, it binds directly to 16S rRNA where it nucleates assembly of the head domain of the 30S subunit. Is located at the subunit interface close to the decoding center, probably blocks exit of the E-site tRNA. The chain is Small ribosomal subunit protein uS7 from Campylobacter concisus (strain 13826).